Consider the following 404-residue polypeptide: Adenosylhomocysteinase (404 aa).

Substrate contacts are provided by Asp-114 and Glu-139. NAD(+) is bound at residue 140–142 (TTT). Positions 169 and 173 each coordinate substrate. Residues Asn-174, 203-208 (GYGWCG), Glu-226, Asn-261, 282-284 (AGH), and Asn-329 each bind NAD(+).

It belongs to the adenosylhomocysteinase family. It depends on NAD(+) as a cofactor.

Its subcellular location is the cytoplasm. It carries out the reaction S-adenosyl-L-homocysteine + H2O = L-homocysteine + adenosine. It functions in the pathway amino-acid biosynthesis; L-homocysteine biosynthesis; L-homocysteine from S-adenosyl-L-homocysteine: step 1/1. Its function is as follows. May play a key role in the regulation of the intracellular concentration of adenosylhomocysteine. The protein is Adenosylhomocysteinase of Thermotoga maritima (strain ATCC 43589 / DSM 3109 / JCM 10099 / NBRC 100826 / MSB8).